Reading from the N-terminus, the 829-residue chain is Dipeptidyl peptidase family member 2 (829 aa).

The Cytoplasmic segment spans residues 1–27 (MENDNYDVEEQGCSVFNGKHGYFARSC). A helical; Signal-anchor for type II membrane protein transmembrane segment spans residues 28-48 (CVVFILIICVIFVFSVIFTFM). The Extracellular portion of the chain corresponds to 49 to 829 (QNPINLNSDN…DCFKSNLDLL (781 aa)). N-linked (GlcNAc...) asparagine glycosylation is found at asparagine 61, asparagine 66, asparagine 183, asparagine 209, asparagine 314, and asparagine 359. Cysteine 514 and cysteine 533 form a disulfide bridge. Catalysis depends on serine 691, which acts as the Charge relay system. A disulfide bridge connects residues cysteine 711 and cysteine 821. N-linked (GlcNAc...) asparagine glycosylation occurs at asparagine 754. Residues aspartate 768 and histidine 800 each act as charge relay system in the active site.

It belongs to the peptidase S9B family. DPPIV subfamily.

Its subcellular location is the cell membrane. Functionally, removes N-terminal dipeptides sequentially from polypeptides. Essential for control of distal tip cell migration. In Caenorhabditis elegans, this protein is Dipeptidyl peptidase family member 2 (dpf-2).